The sequence spans 472 residues: Peptidoglycan endopeptidase RipA (472 aa).

Residues 1-39 (MRRNRRGSPARPAARFVRPAIPSALSVALLVCTPGLATA) constitute a signal peptide (tat-type signal). Residues 340–472 (RQASEYVIRR…TPYVVRYIEY (133 aa)) enclose the NlpC/P60 domain. Residue C383 is the Nucleophile of the active site. H432 functions as the Proton acceptor in the catalytic mechanism. E444 is an active-site residue.

It belongs to the peptidase C40 family. Monomer. Interacts with RpfB and PBP1A (ponA1) via residues 448-472 of RipA, interacts with RpfE. Interacts with the chaperone MoxR1. RipA-MoxR1 interaction in the cytoplasm leads to proper folding of RipA, resulting in its secretion. Also interacts with Mce2B. Exported by the Tat system. The position of the signal peptide cleavage has not been experimentally proven.

It is found in the secreted. With respect to regulation, moxR1-mediated folding is critical for secretion via the TAT system. The synergistic effects on peptidoglycan degradation of RipA plus RpfB are inhibited by addition of PBP1A (ponA1). Its function is as follows. Peptidoglycan endopeptidase that cleaves the bond between D-glutamate and meso-diaminopimelate. Binds and degrades high-molecular weight peptidoglycan from a number of Actinobacteria; activity is increased in the presence of RpfB and inhibited by PBP1A (ponA1). Required for normal separation of daughter cells after cell division and for cell wall integrity. Required for host cell invasion and intracellular survival in host macrophages. The sequence is that of Peptidoglycan endopeptidase RipA (ripA) from Mycobacterium tuberculosis (strain ATCC 25618 / H37Rv).